Consider the following 463-residue polypeptide: SH3 domain-binding protein 5 (463 aa).

Over residues 1 to 12 (MDTALKRSRSDE) the composition is skewed to basic and acidic residues. The tract at residues 1–69 (MDTALKRSRS…DDINRRETEL (69 aa)) is disordered. Acidic residues predominate over residues 25 to 44 (EKEEEEERMEQGLEEEEEEV). A sufficient for interaction with RAB11A and for guanine nucleotide exchange activity region spans residues 33 to 268 (MEQGLEEEEE…EIHERRRSNA (236 aa)). A compositionally biased stretch (basic and acidic residues) spans 45-54 (DPRIQGELEK). 4 coiled-coil regions span residues 47 to 93 (RIQG…LAKK), 100 to 148 (DSKP…RLLE), 157 to 203 (AWQE…LEKK), and 214 to 258 (YFEL…RISD). The span at 309–320 (NCSNLVSEDDSE) shows a compositional bias: acidic residues. Residues 309 to 348 (NCSNLVSEDDSETQSVSSFSSGPTSPSEMPDQFPAVARPG) are disordered. Positions 323-335 (SVSSFSSGPTSPS) are enriched in low complexity. Phosphoserine; by MAPK12 and MAPK9 is present on S354. The segment at 372-429 (SECSGASSPECEVERGDRAEGAENKMSDKANNNRVLGSTNGGSGRSRSQSSTSLESQA) is disordered. Phosphoserine occurs at positions 378 and 379. Over residues 383-399 (EVERGDRAEGAENKMSD) the composition is skewed to basic and acidic residues. Positions 416–428 (RSRSQSSTSLESQ) are enriched in low complexity. Phosphoserine is present on residues S421 and S424.

The protein belongs to the SH3BP5 family. In terms of assembly, interacts with BTK. Interacts with all isoforms of MAPK8, MAPK9, MAPK10 and MAPK12. Interacts with GDP-bound and nucleotide-free forms of RAB11A.

It localises to the cytoplasmic vesicle membrane. It is found in the mitochondrion. In terms of biological role, functions as a guanine nucleotide exchange factor (GEF) with specificity for RAB11A and RAB25. Inhibits the auto- and transphosphorylation activity of BTK. Plays a negative regulatory role in BTK-related cytoplasmic signaling in B-cells. May be involved in BCR-induced apoptotic cell death. The protein is SH3 domain-binding protein 5 (Sh3bp5) of Mus musculus (Mouse).